The primary structure comprises 899 residues: Protein translocase subunit SecA (899 aa).

ATP-binding positions include Gln89, 107-111, and Asp502; that span reads GEGKT. 4 residues coordinate Zn(2+): Cys882, Cys884, Cys893, and His894.

This sequence belongs to the SecA family. As to quaternary structure, monomer and homodimer. Part of the essential Sec protein translocation apparatus which comprises SecA, SecYEG and auxiliary proteins SecDF-YajC and YidC. The cofactor is Zn(2+).

Its subcellular location is the cell inner membrane. It is found in the cytoplasm. It catalyses the reaction ATP + H2O + cellular proteinSide 1 = ADP + phosphate + cellular proteinSide 2.. Functionally, part of the Sec protein translocase complex. Interacts with the SecYEG preprotein conducting channel. Has a central role in coupling the hydrolysis of ATP to the transfer of proteins into and across the cell membrane, serving both as a receptor for the preprotein-SecB complex and as an ATP-driven molecular motor driving the stepwise translocation of polypeptide chains across the membrane. The chain is Protein translocase subunit SecA from Allorhizobium ampelinum (strain ATCC BAA-846 / DSM 112012 / S4) (Agrobacterium vitis (strain S4)).